The following is a 413-amino-acid chain: Argininosuccinate synthase (413 aa).

8–16 (AYSGGLDTS) contributes to the ATP binding site. Tyrosine 87 contributes to the L-citrulline binding site. Glycine 117 is a binding site for ATP. Positions 119, 123, and 124 each coordinate L-aspartate. Residue asparagine 123 coordinates L-citrulline. Residues arginine 127, serine 175, glutamate 259, and tyrosine 271 each coordinate L-citrulline.

This sequence belongs to the argininosuccinate synthase family. Type 1 subfamily. In terms of assembly, homotetramer.

The protein resides in the cytoplasm. The catalysed reaction is L-citrulline + L-aspartate + ATP = 2-(N(omega)-L-arginino)succinate + AMP + diphosphate + H(+). Its pathway is amino-acid biosynthesis; L-arginine biosynthesis; L-arginine from L-ornithine and carbamoyl phosphate: step 2/3. This Micrococcus luteus (strain ATCC 4698 / DSM 20030 / JCM 1464 / CCM 169 / CCUG 5858 / IAM 1056 / NBRC 3333 / NCIMB 9278 / NCTC 2665 / VKM Ac-2230) (Micrococcus lysodeikticus) protein is Argininosuccinate synthase.